An 836-amino-acid polypeptide reads, in one-letter code: Phenylalanine--tRNA ligase beta subunit (836 aa).

The region spanning 44-160 (PETTGPLVIG…EIAEPGTDAR (117 aa)) is the tRNA-binding domain. One can recognise a B5 domain in the interval 420 to 495 (PSMPQIRMKT…RLEGLEDIPT (76 aa)). Mg(2+) contacts are provided by Asp-473, Asp-479, Glu-482, and Glu-483. One can recognise an FDX-ACB domain in the interval 742–835 (SAFPVLHQDL…AAELFGATMR (94 aa)).

It belongs to the phenylalanyl-tRNA synthetase beta subunit family. Type 1 subfamily. Tetramer of two alpha and two beta subunits. The cofactor is Mg(2+).

It is found in the cytoplasm. It carries out the reaction tRNA(Phe) + L-phenylalanine + ATP = L-phenylalanyl-tRNA(Phe) + AMP + diphosphate + H(+). This is Phenylalanine--tRNA ligase beta subunit from Corynebacterium diphtheriae (strain ATCC 700971 / NCTC 13129 / Biotype gravis).